We begin with the raw amino-acid sequence, 211 residues long: tRNA (guanine-N(7)-)-methyltransferase (211 aa).

Glu44, Asp69, Asp96, and Asp118 together coordinate S-adenosyl-L-methionine. The active site involves Asp118. A substrate-binding site is contributed by Lys122. Positions 124–129 are interaction with RNA; the sequence is KHEKRR. Substrate-binding positions include Asp154 and 191–194; that span reads TEYE.

It belongs to the class I-like SAM-binding methyltransferase superfamily. TrmB family.

It catalyses the reaction guanosine(46) in tRNA + S-adenosyl-L-methionine = N(7)-methylguanosine(46) in tRNA + S-adenosyl-L-homocysteine. It participates in tRNA modification; N(7)-methylguanine-tRNA biosynthesis. Its function is as follows. Catalyzes the formation of N(7)-methylguanine at position 46 (m7G46) in tRNA. This Streptococcus pyogenes serotype M12 (strain MGAS2096) protein is tRNA (guanine-N(7)-)-methyltransferase.